Here is a 259-residue protein sequence, read N- to C-terminus: 3-deoxy-manno-octulosonate cytidylyltransferase (259 aa).

Belongs to the KdsB family.

The protein resides in the cytoplasm. The enzyme catalyses 3-deoxy-alpha-D-manno-oct-2-ulosonate + CTP = CMP-3-deoxy-beta-D-manno-octulosonate + diphosphate. It functions in the pathway nucleotide-sugar biosynthesis; CMP-3-deoxy-D-manno-octulosonate biosynthesis; CMP-3-deoxy-D-manno-octulosonate from 3-deoxy-D-manno-octulosonate and CTP: step 1/1. The protein operates within bacterial outer membrane biogenesis; lipopolysaccharide biosynthesis. In terms of biological role, activates KDO (a required 8-carbon sugar) for incorporation into bacterial lipopolysaccharide in Gram-negative bacteria. The polypeptide is 3-deoxy-manno-octulosonate cytidylyltransferase (Actinobacillus succinogenes (strain ATCC 55618 / DSM 22257 / CCUG 43843 / 130Z)).